A 225-amino-acid polypeptide reads, in one-letter code: Thymidylate kinase (225 aa).

An ATP-binding site is contributed by Gly10–Thr17.

The protein belongs to the thymidylate kinase family.

The catalysed reaction is dTMP + ATP = dTDP + ADP. Its function is as follows. Phosphorylation of dTMP to form dTDP in both de novo and salvage pathways of dTTP synthesis. The chain is Thymidylate kinase from Geobacillus thermodenitrificans (strain NG80-2).